A 177-amino-acid chain; its full sequence is Large ribosomal subunit protein uL6 (177 aa).

Residues 156–171 (PYKGKGVRYDTETIRR) show a composition bias toward basic and acidic residues. The disordered stretch occupies residues 156–177 (PYKGKGVRYDTETIRRKEGKKK).

Belongs to the universal ribosomal protein uL6 family. In terms of assembly, part of the 50S ribosomal subunit.

Functionally, this protein binds to the 23S rRNA, and is important in its secondary structure. It is located near the subunit interface in the base of the L7/L12 stalk, and near the tRNA binding site of the peptidyltransferase center. This chain is Large ribosomal subunit protein uL6, found in Gluconacetobacter diazotrophicus (strain ATCC 49037 / DSM 5601 / CCUG 37298 / CIP 103539 / LMG 7603 / PAl5).